Reading from the N-terminus, the 360-residue chain is Dynein intermediate light chain dil1 (360 aa).

The protein belongs to the dynein light intermediate chain DYN3 family. As to quaternary structure, the dynein complex consists of at least two heavy chains and a number of intermediate and light chains. Interacts with rga3, sec10, sec16, syp1, rvb2, spbc19c7.04c, spbc2f12.05 and spac3a11.10c. The N-terminal part is acetylated.

It is found in the cytoplasm. The protein resides in the cytoskeleton. Its function is as follows. Component of the cytoplasmic dynein which acts as a motor for the intracellular retrograde motility of vesicles and organelles along microtubules. Promotes oscillatory nuclear movement and efficient pairing of homologous centromeres during meiotic prophase. The polypeptide is Dynein intermediate light chain dil1 (dil1) (Schizosaccharomyces pombe (strain 972 / ATCC 24843) (Fission yeast)).